We begin with the raw amino-acid sequence, 199 residues long: Small ribosomal subunit protein uS4 (199 aa).

The 64-residue stretch at 91–154 (SRLDNLVYRM…RGLQLIKDAL (64 aa)) folds into the S4 RNA-binding domain.

It belongs to the universal ribosomal protein uS4 family. As to quaternary structure, part of the 30S ribosomal subunit. Contacts protein S5. The interaction surface between S4 and S5 is involved in control of translational fidelity.

In terms of biological role, one of the primary rRNA binding proteins, it binds directly to 16S rRNA where it nucleates assembly of the body of the 30S subunit. Its function is as follows. With S5 and S12 plays an important role in translational accuracy. This is Small ribosomal subunit protein uS4 from Brevibacillus brevis (strain 47 / JCM 6285 / NBRC 100599).